A 377-amino-acid chain; its full sequence is Guanine nucleotide-binding protein subunit beta (377 aa).

7 WD repeats span residues 63 to 93 (GHTG…IVWN), 105 to 135 (LPCA…SIFN), 154 to 185 (GHKG…VLWD), 202 to 233 (GHTA…RLWD), 246 to 276 (CHEG…RLFD), 293 to 323 (GDIP…YVWD), and 339 to 369 (SHEG…KIWA).

Belongs to the WD repeat G protein beta family. As to quaternary structure, g proteins are composed of 3 units, alpha, beta and gamma.

The protein resides in the cell membrane. It localises to the endoplasmic reticulum membrane. In terms of biological role, guanine nucleotide-binding proteins (G proteins) are involved as a modulator or transducer in various transmembrane signaling systems. The beta and gamma chains are required for the GTPase activity, for replacement of GDP by GTP, and for G protein-effector interaction. This is Guanine nucleotide-binding protein subunit beta from Nicotiana plumbaginifolia (Leadwort-leaved tobacco).